A 303-amino-acid polypeptide reads, in one-letter code: Coenzyme PQQ synthesis protein B (303 aa).

Belongs to the PqqB family.

Its pathway is cofactor biosynthesis; pyrroloquinoline quinone biosynthesis. In terms of biological role, may be involved in the transport of PQQ or its precursor to the periplasm. The chain is Coenzyme PQQ synthesis protein B from Pseudomonas syringae pv. syringae (strain B728a).